The sequence spans 26 residues: Neprilysin (26 aa).

This sequence belongs to the peptidase M13 family. Zn(2+) is required as a cofactor.

The protein localises to the cell membrane. The enzyme catalyses Preferential cleavage of polypeptides between hydrophobic residues, particularly with Phe or Tyr at P1'.. It catalyses the reaction substance P + H2O = substance P(1-9) + L-Leu-L-Met-NH2. It carries out the reaction substance P + H2O = substance P(1-7) + L-Phe-Gly-L-Leu-L-Met-NH2. The catalysed reaction is neurotensin + H2O = neurotensin(1-11) + L-isoleucyl-L-leucine. The enzyme catalyses neurotensin + H2O = neurotensin(1-10) + L-tyrosyl-L-isoleucyl-L-leucine. Its function is as follows. Thermolysin-like specificity, but is almost confined on acting on polypeptides of up to 30 amino acids. Biologically important in the destruction of opioid peptides such as Met- and Leu-enkephalins by cleavage of a Gly-Phe bond. Catalyzes cleavage of bradykinin, substance P and neurotensin peptides. Able to cleave angiotensin-1, angiotensin-2 and angiotensin 1-9. Involved in the degradation of atrial natriuretic factor (ANF) and brain natriuretic factor (BNP(1-32)). Displays UV-inducible elastase activity toward skin preelastic and elastic fibers. In Sus scrofa (Pig), this protein is Neprilysin (MME).